Consider the following 692-residue polypeptide: Elongation factor G (692 aa).

The region spanning 8-282 (ENTRNIGIMA…AVIDYLPSPL (275 aa)) is the tr-type G domain. GTP-binding positions include 17-24 (AHIDAGKT), 81-85 (DTPGH), and 135-138 (NKMD).

It belongs to the TRAFAC class translation factor GTPase superfamily. Classic translation factor GTPase family. EF-G/EF-2 subfamily.

The protein resides in the cytoplasm. In terms of biological role, catalyzes the GTP-dependent ribosomal translocation step during translation elongation. During this step, the ribosome changes from the pre-translocational (PRE) to the post-translocational (POST) state as the newly formed A-site-bound peptidyl-tRNA and P-site-bound deacylated tRNA move to the P and E sites, respectively. Catalyzes the coordinated movement of the two tRNA molecules, the mRNA and conformational changes in the ribosome. The protein is Elongation factor G of Bacillus cereus (strain Q1).